Consider the following 121-residue polypeptide: Large ribosomal subunit protein eL18 (121 aa).

This sequence belongs to the eukaryotic ribosomal protein eL18 family.

The sequence is that of Large ribosomal subunit protein eL18 from Methanocaldococcus jannaschii (strain ATCC 43067 / DSM 2661 / JAL-1 / JCM 10045 / NBRC 100440) (Methanococcus jannaschii).